The sequence spans 358 residues: DNA methyltransferase CcrM (358 aa).

The interval 1–260 is methyltransferase; it reads MKFGPETIIH…AKVVPIAPED (260 aa). DNA-binding regions (target strand DNA) lie at residues 31-34 and 39-45; these read DPPY and GGDLLRP. DNA-binding regions (non-target strand DNA) lie at residues 93-94 and 109-110; these read YH and WI. Residue H94 participates in dsDNA binding. A DNA-binding region (target strand DNA) is located at residues 122–132; it reads MPNFKGTRFAN. The non-target strand DNA DNA-binding region spans 153–157; the sequence is YDALK. The dsDNA site is built by Q164 and R179. Positions 187-193 form a DNA-binding region, target strand DNA; that stretch reads KAHPTQK. The RAMA domain occupies 259-355; that stretch reads EDLDVMGSKR…IDVLRAQVRA (97 aa). The linker stretch occupies residues 261 to 270; it reads LDVMGSKRAE. Residues K267 and R272 each coordinate dsDNA. A non-specific DNA-binding region spans residues 272-358; it reads RVPFGTIVEA…LRAQVRAGMN (87 aa). DNA-binding regions (non-target strand DNA) lie at residues 315–317 and 330–332; these read SIH and NGW. Residue R350 participates in dsDNA binding.

This sequence belongs to the N(4)/N(6)-methyltransferase family. As to quaternary structure, homodimer. Rapidly degraded by Lon protease prior to cell division.

The catalysed reaction is a 2'-deoxyadenosine in DNA + S-adenosyl-L-methionine = an N(6)-methyl-2'-deoxyadenosine in DNA + S-adenosyl-L-homocysteine + H(+). In terms of biological role, a beta subtype methylase that recognizes the double-stranded sequence 5'-GANTC-3' and methylates non-modifed A-2 on the hemimethylated, post-replicative DNA. Opens a bubble in the DNA at the recognition site, allowing precise recognition of the sequence and ensuring enzyme specificity. Functions only in the predivisional cell. Responsible for 5'-GANTC-3' methylation in the cell; methylation of hemimethylated sites generated after replication fork passage occurs late in the predivisional cell, near completion of chromosome replication but prior to cell division. Contributes to the accurate cell-cycle control of DNA replication and cellular morphology. In Caulobacter vibrioides (strain ATCC 19089 / CIP 103742 / CB 15) (Caulobacter crescentus), this protein is DNA methyltransferase CcrM (ccrMIM).